Here is a 380-residue protein sequence, read N- to C-terminus: MAEFVRAEILGTKFEYTTRYVNLQPIGMGSFGLVCSAFDQITQQLVALKKVMKPFDGSSLAKRTYREIKLLKYLRHENLICLRDIFISPLEDIYIATELLGTDLSRLLSVKPLDSQFAQYFIYQILRGLKYIHSANVIHRDLKPTNILINENCDLKICDFGLARLQEPQMTGYVSTRYYRAPEIMLTWQRYGVQVDIWSAGCILAEMLRGKPLFPGKDHVHQFHLITNILGNPPKSVLEKITSKNTMKFVQSLPSREPRDLSTIVPKDTDFDAIDLLKKMLVIDPDIRVSAQDALRHPYLAPYHDPTDEPVAAGPFDWSFNNMDLPKETWKVMIYSEVLDYLSVDSPDSGSMALGGSSPFDHRALDREFSEFFDDREGPM.

The Protein kinase domain occupies 20–300 (YVNLQPIGMG…AQDALRHPYL (281 aa)). ATP is bound by residues 26 to 34 (IGMGSFGLV) and Lys49. Catalysis depends on Asp141, which acts as the Proton acceptor. Position 171 is a phosphothreonine (Thr171). Positions 171–173 (TGY) match the TXY motif. Tyr173 is subject to Phosphotyrosine.

This sequence belongs to the protein kinase superfamily. Ser/Thr protein kinase family. MAP kinase subfamily. HOG1 sub-subfamily. It depends on Mg(2+) as a cofactor. Post-translationally, dually phosphorylated on Thr-171 and Tyr-173, which activates the enzyme.

The catalysed reaction is L-seryl-[protein] + ATP = O-phospho-L-seryl-[protein] + ADP + H(+). The enzyme catalyses L-threonyl-[protein] + ATP = O-phospho-L-threonyl-[protein] + ADP + H(+). Its activity is regulated as follows. Activated by tyrosine and threonine phosphorylation. Mitogen-activated protein kinase required for growth on media where sorbitol or mannitol is the sole carbon source. The polypeptide is Mitogen-activated protein kinase mpkC (mpkC) (Aspergillus clavatus (strain ATCC 1007 / CBS 513.65 / DSM 816 / NCTC 3887 / NRRL 1 / QM 1276 / 107)).